The following is a 72-amino-acid chain: Mitotic-spindle organizing protein 1 (72 aa).

This sequence belongs to the MOZART1 family. In terms of assembly, part of the gamma-tubulin complex.

Its subcellular location is the cytoplasm. The protein resides in the cytoskeleton. It is found in the microtubule organizing center. It localises to the spindle pole body. Functionally, required for gamma-tubulin complex recruitment to the microtubule organizing center (MTOC). The sequence is that of Mitotic-spindle organizing protein 1 from Cryptococcus neoformans var. neoformans serotype D (strain B-3501A) (Filobasidiella neoformans).